A 245-amino-acid polypeptide reads, in one-letter code: Uridylate kinase (245 aa).

An ATP-binding site is contributed by 15-18; the sequence is KLSG. The interval 23-28 is involved in allosteric activation by GTP; it reads GDEGFG. Position 57 (Gly57) interacts with UMP. Gly58 and Arg62 together coordinate ATP. UMP is bound by residues Asp77 and 138–145; that span reads TGNPFCTT. ATP-binding residues include Thr165, Tyr171, and Asp174.

The protein belongs to the UMP kinase family. In terms of assembly, homohexamer.

Its subcellular location is the cytoplasm. The catalysed reaction is UMP + ATP = UDP + ADP. The protein operates within pyrimidine metabolism; CTP biosynthesis via de novo pathway; UDP from UMP (UMPK route): step 1/1. Allosterically activated by GTP. Inhibited by UTP. Catalyzes the reversible phosphorylation of UMP to UDP. This Shewanella baltica (strain OS155 / ATCC BAA-1091) protein is Uridylate kinase.